We begin with the raw amino-acid sequence, 97 residues long: Cytochrome c2 iso-2 (97 aa).

Heme c contacts are provided by cysteine 10, cysteine 13, histidine 14, and methionine 75.

This sequence belongs to the cytochrome c family. In terms of processing, binds 1 heme c group covalently per subunit.

Functionally, cytochrome c2 is found mainly in purple, non-sulfur, photosynthetic bacteria where it functions as the electron donor to the oxidized bacteriochlorophyll in the photophosphorylation pathway. However, it may also have a role in the respiratory chain and is found in some non-photosynthetic bacteria. The chain is Cytochrome c2 iso-2 from Magnetospirillum molischianum (Rhodospirillum molischianum).